We begin with the raw amino-acid sequence, 382 residues long: RNA binding protein fox-1 homolog 1 (382 aa).

The disordered stretch occupies residues 1-121 (MNCEREQLRG…NKSQPKRLHV (121 aa)). A compositionally biased stretch (polar residues) spans 70-87 (QTHSEQSPADTSAQTVSG). Low complexity predominate over residues 88–99 (TATQTDDAAPTD). The segment covering 100–113 (GQPQTQPSENTENK) has biased composition (polar residues). The region spanning 117–193 (KRLHVSNIPF…RKIEVNNATA (77 aa)) is the RRM domain. Arg-317 bears the Asymmetric dimethylarginine mark. Positions 357 to 382 (MPQGSSPSTDFRGAKLHTSRPLLSGS) are disordered.

Binds to the C-terminus of ATXN2.

The protein resides in the nucleus. Its subcellular location is the cytoplasm. RNA-binding protein that regulates alternative splicing events by binding to 5'-UGCAUGU-3' elements. Prevents binding of U2AF2 to the 3'-splice site. Regulates alternative splicing of tissue-specific exons and of differentially spliced exons during erythropoiesis. This Pongo abelii (Sumatran orangutan) protein is RNA binding protein fox-1 homolog 1 (RBFOX1).